Reading from the N-terminus, the 497-residue chain is Serine/threonine-protein phosphatase 2A 56 kDa regulatory subunit beta isoform (497 aa).

Residues 1–19 (METKLPPASTPTSPSSPGL) are compositionally biased toward low complexity. Disordered regions lie at residues 1–55 (METK…YQSN) and 473–497 (QGTQ…GGQS). Phosphoserine occurs at positions 32, 35, 44, 46, 47, and 48. The segment covering 34 to 45 (RSLRRARPRRSH) has biased composition (basic residues).

It belongs to the phosphatase 2A regulatory subunit B56 family. As to quaternary structure, component of the serine/threonine-protein phosphatase 2A complex (PP2A). This complex consists of a common heterodimeric core enzyme, composed of a 36 kDa catalytic subunit (subunit C) and a 65 kDa constant scaffold subunit (PR65 or subunit A), that associates with a variety of regulatory subunits. Proteins that associate with the core dimer include three families of regulatory subunits B (the R2/B/PR55/B55, R3/B''/PR72/PR130/PR59 and R5/B'/B56 families), the 48 kDa variable regulatory subunit, viral proteins, and cell signaling molecules. Interacts with SGO1. Interacts with AKT1. In terms of processing, ubiquitinated by CUL3-KLHL15 complex; this modification leads to proteasomal degradation. As to expression, widely expressed at the mRNA level, with highest levels in cerebellum and lung.

It localises to the cytoplasm. As the regulatory component of the serine/threonine-protein phosphatase 2A (PP2A) holoenzyme, modulates substrate specificity, subcellular localization, and responsiveness to phosphorylation. The phosphorylated form mediates the interaction between PP2A and AKT1, leading to AKT1 dephosphorylation. This is Serine/threonine-protein phosphatase 2A 56 kDa regulatory subunit beta isoform (Ppp2r5b) from Rattus norvegicus (Rat).